A 356-amino-acid polypeptide reads, in one-letter code: UDP-N-acetylglucosamine--N-acetylmuramyl-(pentapeptide) pyrophosphoryl-undecaprenol N-acetylglucosamine transferase (356 aa).

Positions 195 and 287 each coordinate UDP-N-acetyl-alpha-D-glucosamine.

Belongs to the glycosyltransferase 28 family. MurG subfamily.

It localises to the cell membrane. It carries out the reaction Mur2Ac(oyl-L-Ala-gamma-D-Glu-L-Lys-D-Ala-D-Ala)-di-trans,octa-cis-undecaprenyl diphosphate + UDP-N-acetyl-alpha-D-glucosamine = beta-D-GlcNAc-(1-&gt;4)-Mur2Ac(oyl-L-Ala-gamma-D-Glu-L-Lys-D-Ala-D-Ala)-di-trans,octa-cis-undecaprenyl diphosphate + UDP + H(+). It participates in cell wall biogenesis; peptidoglycan biosynthesis. Its function is as follows. Cell wall formation. Catalyzes the transfer of a GlcNAc subunit on undecaprenyl-pyrophosphoryl-MurNAc-pentapeptide (lipid intermediate I) to form undecaprenyl-pyrophosphoryl-MurNAc-(pentapeptide)GlcNAc (lipid intermediate II). This Streptococcus sanguinis (strain SK36) protein is UDP-N-acetylglucosamine--N-acetylmuramyl-(pentapeptide) pyrophosphoryl-undecaprenol N-acetylglucosamine transferase.